A 231-amino-acid chain; its full sequence is Large ribosomal subunit protein uL3 (231 aa).

Gln151 is subject to N5-methylglutamine.

It belongs to the universal ribosomal protein uL3 family. Part of the 50S ribosomal subunit. Forms a cluster with proteins L14 and L19. In terms of processing, methylated by PrmB.

Functionally, one of the primary rRNA binding proteins, it binds directly near the 3'-end of the 23S rRNA, where it nucleates assembly of the 50S subunit. This Granulibacter bethesdensis (strain ATCC BAA-1260 / CGDNIH1) protein is Large ribosomal subunit protein uL3.